Here is a 354-residue protein sequence, read N- to C-terminus: GDSL esterase/lipase At3g09930 (354 aa).

A signal peptide spans 1 to 24 (MELPKLLISLFLFSFSSFFLGAES). The active-site Nucleophile is the S46. N-linked (GlcNAc...) asparagine glycosylation is found at N133, N233, N237, N256, and N300. Residues D329 and H332 contribute to the active site.

It belongs to the 'GDSL' lipolytic enzyme family.

Its subcellular location is the secreted. The chain is GDSL esterase/lipase At3g09930 from Arabidopsis thaliana (Mouse-ear cress).